A 1404-amino-acid polypeptide reads, in one-letter code: Clustered mitochondria protein homolog (1404 aa).

Residues His-357–Leu-646 form the Clu domain. Residues Ala-528 to Glu-540 show a composition bias toward acidic residues. 4 disordered regions span residues Ala-528 to Ala-561, Asp-706 to Asp-735, Gly-996 to Thr-1046, and Ser-1337 to Thr-1372. The segment covering Asp-706–Ala-723 has biased composition (basic and acidic residues). Composition is skewed to low complexity over residues Asn-1021 to Thr-1046 and Ala-1358 to Thr-1372.

This sequence belongs to the CLU family. In terms of assembly, may associate with the eukaryotic translation initiation factor 3 (eIF-3) complex.

The protein resides in the cytoplasm. MRNA-binding protein involved in proper cytoplasmic distribution of mitochondria. This is Clustered mitochondria protein homolog from Mycosarcoma maydis (Corn smut fungus).